The sequence spans 213 residues: MVDKTSIQEAVKTALSKAPERKFKESVDITVNLRNIDMSQPKNRIDETIHLPNGFDNVKIAVLGKGDIVTQAKEVNVDLIIGPEEIERLGGEPREARKVAGEYRFFLAETAMMPLVGRYLGVRLGPRGRMPMPVPQGMDIRPIVQRLRSSVKIRTKDKKVFHTKVGTSGMEPEQIAENIDAVLHRVESVLESGTMNIHSVYVKTTMGPAVRVI.

It belongs to the universal ribosomal protein uL1 family. In terms of assembly, part of the 50S ribosomal subunit.

In terms of biological role, binds directly to 23S rRNA. Probably involved in E site tRNA release. Functionally, protein L1 is also a translational repressor protein, it controls the translation of its operon by binding to its mRNA. The polypeptide is Large ribosomal subunit protein uL1 (Methanoculleus marisnigri (strain ATCC 35101 / DSM 1498 / JR1)).